The following is a 379-amino-acid chain: Transcription factor bHLH122 (379 aa).

The segment covering 1–17 (MESEFQQHHFLLHDHQH) has biased composition (basic and acidic residues). Residues 1-21 (MESEFQQHHFLLHDHQHQRPR) are disordered. S74 carries the post-translational modification Phosphoserine. 3 disordered regions span residues 79-98 (TFNS…EDED), 133-156 (SVSR…ARHN), and 190-286 (TSNT…MSLP). A compositionally biased stretch (basic and acidic residues) spans 84 to 93 (GTEKKPPEVK). Over residues 190-200 (TSNTEASSLTP) the composition is skewed to polar residues. Residues S213 and S234 each carry the phosphoserine modification. Over residues 235–261 (GGFNRSFGNEGSASSKLTALARTQSGG) the composition is skewed to polar residues. Over residues 265–274 (YKTKDEDSAS) the composition is skewed to basic and acidic residues. Residues 310 to 360 (CATHPRSIAERVRRTKISERMRKLQDLVPNMDTQTNTADMLDLAVQYIKDL) form the bHLH domain.

In terms of assembly, homodimer.

Its subcellular location is the nucleus. This Arabidopsis thaliana (Mouse-ear cress) protein is Transcription factor bHLH122 (BHLH122).